Consider the following 867-residue polypeptide: Bifunctional cis-abienol synthase, chloroplastic (867 aa).

The N-terminal 49 residues, 1 to 49, are a transit peptide targeting the chloroplast; the sequence is MALPVYSLKSHIPITTIASAKMNYTPNKGMITANGRSRRIRLSPNKIVA. K270 serves as a coordination point for substrate. The DXDD motif motif lies at 403 to 406; the sequence is DIDD. Substrate is bound at residue K490. Residues D622, D626, N763, D764, T767, and E771 each contribute to the Mg(2+) site. Residues 622–626 carry the DDXXD motif motif; it reads DDLYD.

The protein belongs to the terpene synthase family. Tpsd subfamily. The cofactor is Mg(2+).

Its subcellular location is the plastid. It is found in the chloroplast. It catalyses the reaction 8-hydroxycopalyl diphosphate = cis-abienol + diphosphate. The catalysed reaction is (2E,6E,10E)-geranylgeranyl diphosphate + H2O = 8-hydroxycopalyl diphosphate. It functions in the pathway terpene metabolism; oleoresin biosynthesis. Involved in the biosynthesis of cis-abienol, a labdane diterpene that can be used as synthesis precursor of ambergris substitution fragance products. Bifunctional class I/II enzyme in which both the bicyclization and water capture occur in the class II active site, resulting in an intermediary labda-13-en-8-ol diphosphate, which undergoes cleavage of the diphosphate group and final deprotonation at the class I active site. No activity with copalyl diphosphate as substrate. This Abies balsamea (Balsam fir) protein is Bifunctional cis-abienol synthase, chloroplastic (CAS).